Consider the following 649-residue polypeptide: Acetyl-coenzyme A synthetase (649 aa).

CoA is bound by residues 189–192 (RGGK), Thr-311, and Asn-335. Residues 387 to 389 (GEP), 411 to 416 (DTWWQT), Asp-500, and Arg-515 each bind ATP. Ser-523 serves as a coordination point for CoA. Arg-526 contacts ATP. Mg(2+) contacts are provided by Val-537, His-539, and Val-542. A CoA-binding site is contributed by Arg-584. N6-acetyllysine is present on Lys-609.

This sequence belongs to the ATP-dependent AMP-binding enzyme family. Requires Mg(2+) as cofactor. In terms of processing, acetylated. Deacetylation by the SIR2-homolog deacetylase activates the enzyme.

The catalysed reaction is acetate + ATP + CoA = acetyl-CoA + AMP + diphosphate. Functionally, catalyzes the conversion of acetate into acetyl-CoA (AcCoA), an essential intermediate at the junction of anabolic and catabolic pathways. AcsA undergoes a two-step reaction. In the first half reaction, AcsA combines acetate with ATP to form acetyl-adenylate (AcAMP) intermediate. In the second half reaction, it can then transfer the acetyl group from AcAMP to the sulfhydryl group of CoA, forming the product AcCoA. In Rhizobium meliloti (strain 1021) (Ensifer meliloti), this protein is Acetyl-coenzyme A synthetase.